The sequence spans 734 residues: Elongation factor 2 (734 aa).

Residues glutamate 18 to arginine 259 enclose the tr-type G domain. GTP is bound by residues alanine 27–threonine 34, aspartate 93–histidine 97, and asparagine 147–aspartate 150. A Diphthamide modification is found at histidine 600.

Belongs to the TRAFAC class translation factor GTPase superfamily. Classic translation factor GTPase family. EF-G/EF-2 subfamily.

It is found in the cytoplasm. Its function is as follows. Catalyzes the GTP-dependent ribosomal translocation step during translation elongation. During this step, the ribosome changes from the pre-translocational (PRE) to the post-translocational (POST) state as the newly formed A-site-bound peptidyl-tRNA and P-site-bound deacylated tRNA move to the P and E sites, respectively. Catalyzes the coordinated movement of the two tRNA molecules, the mRNA and conformational changes in the ribosome. The sequence is that of Elongation factor 2 (fusA) from Desulfurococcus mucosus (Desulfurococcus mobilis).